The primary structure comprises 501 residues: Splicing factor ESS-2 homolog (501 aa).

Composition is skewed to low complexity over residues 1–18 (MSATTRTPATPGTPGTPG) and 105–115 (ISGTGRSTSRR). 2 disordered regions span residues 1 to 20 (MSATTRTPATPGTPGTPGSL) and 105 to 163 (ISGT…GRDT). Polar residues predominate over residues 126–151 (TPVSQAKCSNTPLPNSRATDTPFSTD). The span at 152 to 163 (GSEKSDAEGRDT) shows a compositional bias: basic and acidic residues. 2 positions are modified to phosphoserine: serine 409 and serine 411. The disordered stretch occupies residues 425–471 (RGTPRLRHTPSPMSGRKRKVTPGVVRSTNTPILGEPKPKQQAKISTP).

The protein belongs to the ESS2 family.

The protein localises to the nucleus. This is Splicing factor ESS-2 homolog (Es2) from Drosophila melanogaster (Fruit fly).